Here is a 391-residue protein sequence, read N- to C-terminus: Isocitrate dehydrogenase [NADP] (391 aa).

5 residues coordinate D-threo-isocitrate: Ser-102, Asn-104, Arg-108, Arg-118, and Arg-142. Asp-283 provides a ligand contact to Mg(2+).

Belongs to the isocitrate and isopropylmalate dehydrogenases family. As to quaternary structure, homodimer. Mg(2+) is required as a cofactor. The cofactor is Mn(2+).

The catalysed reaction is D-threo-isocitrate + NADP(+) = 2-oxoglutarate + CO2 + NADPH. In terms of biological role, catalyzes the oxidative decarboxylation of isocitrate to 2-oxoglutarate and carbon dioxide with the concomitant reduction of NADP(+). The sequence is that of Isocitrate dehydrogenase [NADP] (icd) from Streptococcus salivarius.